The primary structure comprises 1818 residues: MNDTDKKFPLQPVYDTGFDDGYLQRDYEKCLESAAANDAQTVELQTQLLAEIKNLENEIKALKAQESRQPDPHNNARIQSLEASLNRLVNEYNNFEFQKNYMVDRVAELNNKARFFKDELKRLQQENAAFVNSRYANWADFQSNYQLKLDQFQALIDQQNQTIKQLNEQIAANQGLIDQNVQRLQQNHSLDQQERDALLYEVDHLYNELYELENQKRLVGIEYEATYQDLVSADAELQNVYETIAQNQANFQKQCDAYWAQLKQVEQQIQTTKQELVDEESTLKVRLNDADFYINSRLAELDDLTSKINERDFVSKEQAQDVKASLANLTKEKERLSAEKDSFERLRNTALNDINRMEQENALFAKHLEQQQYEFERKQQESLLKLETEHKQLQKRIGEFKIESEAKSEALLIQERELLEKRREIDDLLTQASLEYEQQRRTNQVLKEKHRQVQQHFQNLVHAKKKLDQKRHYLAEQKRIDEEQIFKLKEKIATERRELEKLYLVKKQKQDQKENDLLIFEKQLRQYQADFENEIEEKQNELFASQKSLQKSFTQLKNKEAELNQKAQKIAEDWAHLKQNKHHHADLEIFLEGEFNHLQQEKHKLLEARTQFDNRVSLLSARFKQKQAELVKQKQSLEQLTAAFNKEQEAVERDWKDRLANLEKQKEMLGDKVHQFDENSLNISKKLAERELAIKFKEKELEAAQKQLSLDNNNNAGLKLQLDKLSESLKTERLELEASKERILDFYDESSRRIADYESDLQARLAEVKTLEKNQQETAAKSERELKVALEKLNQAKKAFLQIRKQQLLEIASVKQQLAQKANLLKNQQAELDKQTEELEAAFLEQDTDKKELEKALHSVKSKQELLERERSFLLQKQREFAEHVAGFKRQVHFKTTQMQRLSEFNKQQQSEQIKRETELKIAFADLKKDYQLFELQKNQEFQQIEQKHKELELLAQKQAELKQELEQKATALASQDQDTVQAKLDLARQQHELELRQNAFNQASLSLNKQREQLTNQVKVLHGELKKRHEKLTLKDRLLAEKEKDQHKKDAEINQRFKQFENEYADFDQAKKRELQELNQIRRNLEQSNASLLKKRNQLTLDFALLRKVQHNTQTNRVQLNTQIKEFLLEKKNFQKASDEAALQKALLIKRLRSFASKLQLQREALAIQKLEFDKRDEQQKSEINNAKLQLEQFKLEKQNFDEAKQKQLIEFKDQCQRLDVEKRLLKQKLVQLKNLSKSYLTYKNRADLSQQQLQHKYANLLELKEKLQTAKRALDKKHRAIYGKMAQFVSELRQEKKQLLSAQKQVDDKSRLLEQNQRHLQNLSSETKKKRQSLEHDINKFDQRRKEAVSSILNSHKKLKQKEGELQGILQKLSLKKTQIEQEFSKLYQQREKLDRQRTTLSKLHRELKAQNEATAHKNREVLEIENYYKKELQRLTTEKSEFDNNKNRLFEYFRKIRNEIEKKEAHIKTVLEETQKKRHLVETEAVKLHLQKQSIISKGQELKEIKERVSRDISHTNKQREELNSLLHQNKLLQKNLAEREREINNKDSLLTQKIQTAKQKLSEKEARILKLLEKMRAVEQQYQAEITRLKTRNADLEKNDNKHLFPPLFKINGNDMNYPYPYPWFYPQQKQEDSSNQIRHLFEQQLQFMQQRYENELTELRRQRALLEKKLDQIQLESQLSAKKNDFEKVEQMMQKLLEKTEQKLSAFDQKINALAEQINTQKAEHADSEKQQLLLRIEQLEKQNLAQAVQTPQPVQPVVQAPAVVPQVIQPQVVQSQPAFLATQQSISKQQQIAQLNAEINSIKKLIAQKAAK.

Coiled coils occupy residues 31–880 (LESA…KQRE), 919–1607 (ELKI…DNKH), 1644–1755 (HLFE…QAVQ), and 1786–1817 (LATQQSISKQQQIAQLNAEINSIKKLIAQKAA).

Phosphorylated mainly on serine residues.

Its function is as follows. Component of the cytoskeleton-like structure which stabilizes the shape of the wall-less Mycoplasma. This cytoskeleton-like network of accessory proteins containing HMW proteins 1 to 5 allows the proper anchoring of cytadhesin proteins in the mycoplasmal membrane at the attachment organelle. The polypeptide is Cytadherence high molecular weight protein 2 (hmw2) (Mycoplasma pneumoniae (strain ATCC 29342 / M129 / Subtype 1) (Mycoplasmoides pneumoniae)).